A 144-amino-acid chain; its full sequence is Large ribosomal subunit protein uL16 (144 aa).

Residues 1–19 (MLLPKRVKYRRQHRPKTTG) are compositionally biased toward basic residues. The disordered stretch occupies residues 1 to 26 (MLLPKRVKYRRQHRPKTTGRSKGGNE).

This sequence belongs to the universal ribosomal protein uL16 family. As to quaternary structure, part of the 50S ribosomal subunit.

In terms of biological role, binds 23S rRNA and is also seen to make contacts with the A and possibly P site tRNAs. This chain is Large ribosomal subunit protein uL16, found in Macrococcus caseolyticus (strain JCSC5402) (Macrococcoides caseolyticum).